The primary structure comprises 1772 residues: Putative stereocilin-like protein (1772 aa).

A signal peptide spans 1–25 (MALSLWPLLLLLLLLLLLSFAVTLA). N-linked (GlcNAc...) asparagine glycosylation is found at Asn-65, Asn-427, Asn-476, and Asn-565.

Belongs to the stereocilin family.

It localises to the secreted. The polypeptide is Putative stereocilin-like protein (STRCP1) (Homo sapiens (Human)).